Consider the following 41-residue polypeptide: Ornatin-A3 (41 aa).

A Cell attachment site motif is present at residues 33-35 (RGD).

The protein belongs to the ornatin family.

It localises to the secreted. Potent inhibitor of fibrinogen interaction with platelet receptors expressed on glycoprotein IIb-IIIa complex. May prevent blood from clotting during either feeding and/or storage of ingested blood. This chain is Ornatin-A3, found in Placobdella ornata (Turtle leech).